The following is a 430-amino-acid chain: Glutamyl-tRNA reductase (430 aa).

Residues threonine 49–arginine 52, serine 109, glutamate 114–glutamine 116, and glutamine 120 each bind substrate. Cysteine 50 acts as the Nucleophile in catalysis. NADP(+) is bound at residue glycine 189–alanine 194.

The protein belongs to the glutamyl-tRNA reductase family. In terms of assembly, homodimer.

The enzyme catalyses (S)-4-amino-5-oxopentanoate + tRNA(Glu) + NADP(+) = L-glutamyl-tRNA(Glu) + NADPH + H(+). The protein operates within porphyrin-containing compound metabolism; protoporphyrin-IX biosynthesis; 5-aminolevulinate from L-glutamyl-tRNA(Glu): step 1/2. Its pathway is porphyrin-containing compound metabolism; chlorophyll biosynthesis. Catalyzes the NADPH-dependent reduction of glutamyl-tRNA(Glu) to glutamate 1-semialdehyde (GSA). The polypeptide is Glutamyl-tRNA reductase (Crocosphaera subtropica (strain ATCC 51142 / BH68) (Cyanothece sp. (strain ATCC 51142))).